The following is a 411-amino-acid chain: Glutamate dehydrogenase 1 (411 aa).

The active site involves Lys102.

This sequence belongs to the Glu/Leu/Phe/Val dehydrogenases family.

The catalysed reaction is L-glutamate + NAD(+) + H2O = 2-oxoglutarate + NH4(+) + NADH + H(+). It carries out the reaction L-glutamate + NADP(+) + H2O = 2-oxoglutarate + NH4(+) + NADPH + H(+). The chain is Glutamate dehydrogenase 1 (GDH1) from Arabidopsis thaliana (Mouse-ear cress).